A 1035-amino-acid chain; its full sequence is MGKADNYELYSVELGPGPGGDMAAKMSKKKKAGGGGGKRKEKLENMKKEMEINDHQLSVAELEQKYQTSATKGLSARLAAELLLRDGPNALRPPRGTPEYVKFARQLAGGLQCLMWVAAAICLIAFAIQASEGDLTTDDNLYLALALIAVVVVTGCFGYYQEFKSTNIIASFKNLVPQQATVIRDGDKFQINADQLVVGDLVEMKGGDRVPADIRILAAQGCKVDNSSLTGESEPQTRSPECTHESPLETRNIAFFSTMCLEGTAQGLVVNTGDRTIIGRIASLASGVENEKTPIAIEIEHFVDIIAGLAILFGATFFVVAMCIGYTFLRAMVFFMAIVVAYVPEGLLATVTVCLSLTAKRLASKNCVVKNLEAVETLGSTSVICSDKTGTLTQNRMTVSHLWFDNHIHTADTTEDQSGQTFDQSSETWRALCRVLTLCNRAAFKSGQDAVPVPKRIVIGDASETALLKFSELTLGNAMGYRDRFPKVCEIPFNSTNKFQLSIHTLEDPRDPRHLLVMKGAPERVLERCSSILIKGQELPLDEQWREAFQTAYLSLGGLGERVLGFCHLYLSEKDYPPGYAFDVEAMNFPSSGLCFAGLVSMIDPPRATVPDAVLKCRTAGIRVIMVTGDHPITAKAIAASVGIISEGSETVEDIAARLRVPVDQVNRKDARACVINGMQLKDMDPSELVEALRTHPEMVFARTSPQQKLVIVESCQRLGAIVAVTGDGVNDSPALKKADIGVAMGIAGSDAAKNAADMILLDDNFASIVTGVEQGRLIFDNLKKSIAYTLTKNIPELTPYLIYITVSVPLPLGCITILFIELCTDIFPSVSLAYEKAESDIMHLRPRNPKRDRLVNEPLAAYSYFQIGAIQSFAGFTDYFTAMAQEGWFPLLCVGLRPQWEDHHLQDLQDSYGQEWTFGQRLYQQYTCYTVFFISIEMCQIADVLIRKTRRLSAFQQGFFRNRILVIAIVFQVCIGCFLCYCPGMPNIFNFMPIRFQWWLVPMPFGLLIFVYDEIRKLGVRCCPGSWWDQELYY.

Residues 1–41 (MGKADNYELYSVELGPGPGGDMAAKMSKKKKAGGGGGKRKE) form a disordered region. Residues 1-98 (MGKADNYELY…NALRPPRGTP (98 aa)) are Cytoplasmic-facing. Tyrosine 7 and tyrosine 10 each carry phosphotyrosine. Over residues 26–40 (MSKKKKAGGGGGKRK) the composition is skewed to basic residues. Serine 27 carries the post-translational modification Phosphoserine. Residues 99 to 119 (EYVKFARQLAGGLQCLMWVAA) form a helical membrane-spanning segment. Topologically, residues 120–142 (AICLIAFAIQASEGDLTTDDNLY) are lumenal. Residues 143-163 (LALALIAVVVVTGCFGYYQEF) traverse the membrane as a helical segment. Residues 164–299 (KSTNIIASFK…NEKTPIAIEI (136 aa)) lie on the Cytoplasmic side of the membrane. A helical transmembrane segment spans residues 300–319 (EHFVDIIAGLAILFGATFFV). Over 320-331 (VAMCIGYTFLRA) the chain is Lumenal. The chain crosses the membrane as a helical span at residues 332–349 (MVFFMAIVVAYVPEGLLA). 4 residues coordinate K(+): valine 340, alanine 341, valine 343, and glutamate 345. Residues 350–783 (TVTVCLSLTA…EQGRLIFDNL (434 aa)) lie on the Cytoplasmic side of the membrane. The active-site 4-aspartylphosphate intermediate is aspartate 387. Residues aspartate 387 and threonine 389 each contribute to the Mg(2+) site. A phosphoserine mark is found at serine 463 and serine 601. Aspartate 728 and aspartate 732 together coordinate Mg(2+). The chain crosses the membrane as a helical span at residues 784 to 803 (KKSIAYTLTKNIPELTPYLI). Glutamate 797 is a binding site for K(+). Topologically, residues 804–813 (YITVSVPLPL) are lumenal. The helical transmembrane segment at 814–834 (GCITILFIELCTDIFPSVSLA) threads the bilayer. A K(+)-binding site is contributed by glutamate 822. Residues 835 to 854 (YEKAESDIMHLRPRNPKRDR) lie on the Cytoplasmic side of the membrane. Phosphoserine is present on serine 840. A helical transmembrane segment spans residues 855-877 (LVNEPLAAYSYFQIGAIQSFAGF). Over 878–929 (TDYFTAMAQEGWFPLLCVGLRPQWEDHHLQDLQDSYGQEWTFGQRLYQQYTC) the chain is Lumenal. Residues 930 to 949 (YTVFFISIEMCQIADVLIRK) form a helical membrane-spanning segment. Topologically, residues 950–963 (TRRLSAFQQGFFRN) are cytoplasmic. The residue at position 954 (serine 954) is a Phosphoserine; by PKA. The chain crosses the membrane as a helical span at residues 964–982 (RILVIAIVFQVCIGCFLCY). Over 983-997 (CPGMPNIFNFMPIRF) the chain is Lumenal. Residues 998–1018 (QWWLVPMPFGLLIFVYDEIRK) traverse the membrane as a helical segment. Residues 1019–1035 (LGVRCCPGSWWDQELYY) lie on the Cytoplasmic side of the membrane.

This sequence belongs to the cation transport ATPase (P-type) (TC 3.A.3) family. Type IIC subfamily. The gastric H(+)/K(+) ATPase pump is composed of the catalytic alpha subunit ATP4A and the regulatory beta subunit ATP4B. Interacts (via the P-domain) with ATP4B (via N-terminus); this interaction stabilizes the lumenal-open E2 conformation state and prevents the reverse reaction of the transport cycle.

It is found in the apical cell membrane. The protein resides in the cell membrane. It catalyses the reaction K(+)(out) + ATP + H2O + H(+)(in) = K(+)(in) + ADP + phosphate + 2 H(+)(out). The catalytic subunit of the gastric H(+)/K(+) ATPase pump which transports H(+) ions in exchange for K(+) ions across the apical membrane of parietal cells. Uses ATP as an energy source to pump H(+) ions to the gastric lumen while transporting K(+) ion from the lumen into the cell. Remarkably generates a million-fold proton gradient across the gastric parietal cell membrane, acidifying the gastric juice down to pH 1. Within a transport cycle, the transfer of a H(+) ion across the membrane is coupled to ATP hydrolysis and is associated with a transient phosphorylation that shifts the pump conformation from inward-facing (E1) to outward-facing state (E2). The release of the H(+) ion in the stomach lumen is followed by binding of K(+) ion converting the pump conformation back to the E1 state. The chain is Potassium-transporting ATPase alpha chain 1 (ATP4A) from Oryctolagus cuniculus (Rabbit).